The following is a 122-amino-acid chain: LYR motif-containing protein 1 (122 aa).

It belongs to the complex I LYR family.

In terms of biological role, may promote cell proliferation and inhibition of apoptosis of preadipocytes. This chain is LYR motif-containing protein 1 (Lyrm1), found in Mus musculus (Mouse).